A 177-amino-acid chain; its full sequence is Peptidyl-tRNA hydrolase 1 (177 aa).

TRNA is bound at residue Tyr18. His23 acts as the Proton acceptor in catalysis. TRNA-binding residues include Phe65, Asn67, and Asn113.

It belongs to the PTH family. Monomer.

The protein resides in the cytoplasm. It catalyses the reaction an N-acyl-L-alpha-aminoacyl-tRNA + H2O = an N-acyl-L-amino acid + a tRNA + H(+). Functionally, hydrolyzes ribosome-free peptidyl-tRNAs (with 1 or more amino acids incorporated), which drop off the ribosome during protein synthesis, or as a result of ribosome stalling. Its function is as follows. Catalyzes the release of premature peptidyl moieties from peptidyl-tRNA molecules trapped in stalled 50S ribosomal subunits, and thus maintains levels of free tRNAs and 50S ribosomes. This Corynebacterium glutamicum (strain ATCC 13032 / DSM 20300 / JCM 1318 / BCRC 11384 / CCUG 27702 / LMG 3730 / NBRC 12168 / NCIMB 10025 / NRRL B-2784 / 534) protein is Peptidyl-tRNA hydrolase 1.